We begin with the raw amino-acid sequence, 449 residues long: Histidinol dehydrogenase (449 aa).

Positions 136, 204, and 232 each coordinate NAD(+). Positions 255, 277, and 280 each coordinate substrate. Residues glutamine 277 and histidine 280 each coordinate Zn(2+). Catalysis depends on proton acceptor residues glutamate 346 and histidine 347. Histidine 347, aspartate 380, glutamate 434, and histidine 439 together coordinate substrate. Aspartate 380 is a Zn(2+) binding site. Histidine 439 contacts Zn(2+).

This sequence belongs to the histidinol dehydrogenase family. Requires Zn(2+) as cofactor.

The catalysed reaction is L-histidinol + 2 NAD(+) + H2O = L-histidine + 2 NADH + 3 H(+). It functions in the pathway amino-acid biosynthesis; L-histidine biosynthesis; L-histidine from 5-phospho-alpha-D-ribose 1-diphosphate: step 9/9. Catalyzes the sequential NAD-dependent oxidations of L-histidinol to L-histidinaldehyde and then to L-histidine. The polypeptide is Histidinol dehydrogenase (hisD) (Mycobacterium leprae (strain TN)).